Here is a 362-residue protein sequence, read N- to C-terminus: Chorismate synthase (362 aa).

R47 lines the NADP(+) pocket. FMN-binding positions include 124–126, G286, 301–305, and R327; these read RAS and KPTAT.

Belongs to the chorismate synthase family. Homotetramer. Requires FMNH2 as cofactor.

The enzyme catalyses 5-O-(1-carboxyvinyl)-3-phosphoshikimate = chorismate + phosphate. It participates in metabolic intermediate biosynthesis; chorismate biosynthesis; chorismate from D-erythrose 4-phosphate and phosphoenolpyruvate: step 7/7. Its function is as follows. Catalyzes the anti-1,4-elimination of the C-3 phosphate and the C-6 proR hydrogen from 5-enolpyruvylshikimate-3-phosphate (EPSP) to yield chorismate, which is the branch point compound that serves as the starting substrate for the three terminal pathways of aromatic amino acid biosynthesis. This reaction introduces a second double bond into the aromatic ring system. The sequence is that of Chorismate synthase from Synechococcus sp. (strain WH7803).